We begin with the raw amino-acid sequence, 367 residues long: Dye-decolorizing peroxidase (367 aa).

The active-site Proton acceptor is Asp-152. His-225 contacts heme. Residues 311-367 form a disordered region; that stretch reads DPDGELAAAEPSDAQNDDPASASARIEETDPPNPASADDPAPADDSLGIGSLRRRDQ. Residues 345 to 356 are compositionally biased toward low complexity; it reads ASADDPAPADDS. The tract at residues 358–365 is targeting peptide; that stretch reads GIGSLRRR.

The protein belongs to the DyP-type peroxidase family. As to quaternary structure, homohexamer. The cofactor is heme b.

The protein localises to the encapsulin nanocompartment. In terms of biological role, cargo protein of a type 1 encapsulin nanocompartment. Has both general peroxidase activity and dye-decolorizing activity. Can catalyze the oxidation of both protoporphyrinogen IX and coproporphyrinogen III to their corresponding porphyrins. Also efficiently decolorizes the dyes alizarin red and Cibacron blue F3GA. This cargo-loaded encapsulin nanocompartment is probably involved in protection against oxidative damage. The sequence is that of Dye-decolorizing peroxidase from Brevibacterium linens.